A 505-amino-acid chain; its full sequence is Mannosylglucosyl-3-phosphoglycerate synthase (505 aa).

In terms of assembly, monomer in solution.

It carries out the reaction (2R)-2-O-(alpha-D-glucopyranosyl)-3-phospho-glycerate + GDP-alpha-D-mannose = (2R)-2-O-[alpha-D-mannopyranosyl-(1-&gt;2)-alpha-D-glucopyranosyl]-3-phospho-glycerate + GDP + H(+). Not strictly dependent on divalent cations, but the presence of Mn(2+), Ca(2+), Mg(2+) or Co(2+) stimulates activity. Functionally, involved in the biosynthesis of the compatible solute mannosylglucosylglycerate through a phosphorylating pathway. Catalyzes the conversion of glucosyl-3-phosphoglycerate (GPG) to mannosylglucosyl-3-phosphoglycerate (MGPG). The polypeptide is Mannosylglucosyl-3-phosphoglycerate synthase (Petrotoga mobilis (strain DSM 10674 / SJ95)).